The sequence spans 351 residues: Alanine racemase (351 aa).

Lys35 (proton acceptor; specific for D-alanine) is an active-site residue. N6-(pyridoxal phosphate)lysine is present on Lys35. Position 127 (Arg127) interacts with substrate. Tyr247 (proton acceptor; specific for L-alanine) is an active-site residue. Met295 contacts substrate.

This sequence belongs to the alanine racemase family. Pyridoxal 5'-phosphate is required as a cofactor.

The catalysed reaction is L-alanine = D-alanine. Its pathway is amino-acid biosynthesis; D-alanine biosynthesis; D-alanine from L-alanine: step 1/1. In terms of biological role, catalyzes the interconversion of L-alanine and D-alanine. May also act on other amino acids. This chain is Alanine racemase (alr), found in Vesicomyosocius okutanii subsp. Calyptogena okutanii (strain HA).